Consider the following 654-residue polypeptide: DNA ligase (654 aa).

NAD(+) contacts are provided by residues 37 to 41, 86 to 87, and glutamate 113; these read DEEYD and SM. Catalysis depends on lysine 115, which acts as the N6-AMP-lysine intermediate. Positions 136, 170, and 308 each coordinate NAD(+). Positions 402, 405, 418, and 423 each coordinate Zn(2+). The BRCT domain maps to 576 to 654; sequence ITQNAFSGKS…GEFERLKLEI (79 aa).

The protein belongs to the NAD-dependent DNA ligase family. LigA subfamily. Mg(2+) is required as a cofactor. The cofactor is Mn(2+).

The enzyme catalyses NAD(+) + (deoxyribonucleotide)n-3'-hydroxyl + 5'-phospho-(deoxyribonucleotide)m = (deoxyribonucleotide)n+m + AMP + beta-nicotinamide D-nucleotide.. In terms of biological role, DNA ligase that catalyzes the formation of phosphodiester linkages between 5'-phosphoryl and 3'-hydroxyl groups in double-stranded DNA using NAD as a coenzyme and as the energy source for the reaction. It is essential for DNA replication and repair of damaged DNA. The protein is DNA ligase of Campylobacter curvus (strain 525.92).